The sequence spans 395 residues: F-box/kelch-repeat protein SKIP25 (395 aa).

Residues 1–29 (MEKKLKRRESMSTTAAESPPAKRRRTVTG) form a disordered region. An F-box domain is found at 34–79 (ALIEGLPDHISEICLSLVHRPSLLSAVCTRWRRLLYSPEFPSFPSL). Kelch repeat units lie at residues 81 to 129 (ALFV…YRHP), 147 to 194 (LILI…ACDG), 196 to 245 (IYIA…FSRE), 246 to 299 (AIDA…AMEE), and 301 to 342 (ILYS…TQVT).

As to quaternary structure, part of a SCF (ASK-cullin-F-box) protein ligase complex. Interacts with SKP1A/ASK1.

The protein resides in the nucleus. It participates in protein modification; protein ubiquitination. Its function is as follows. Component of SCF(ASK-cullin-F-box) E3 ubiquitin ligase complexes, which may mediate the ubiquitination and subsequent proteasomal degradation of target proteins. The sequence is that of F-box/kelch-repeat protein SKIP25 (SKIP25) from Arabidopsis thaliana (Mouse-ear cress).